A 499-amino-acid chain; its full sequence is Probable inactive receptor-like protein kinase At3g56050 (499 aa).

A signal peptide spans 1–31 (MSNNWKSVRLRLQNRTLVFLLVILSFGSCYS). Asn14 carries an N-linked (GlcNAc...) asparagine glycan. The Extracellular portion of the chain corresponds to 32–146 (LKSQGDGFLE…SKTSSNSTIP (115 aa)). The tract at residues 80 to 121 (RDRPVARATPPSSSVSTRPDAKRSSTLPPPQKSPPAQHVSAP) is disordered. The N-linked (GlcNAc...) asparagine glycan is linked to Asn142. A helical transmembrane segment spans residues 147 to 167 (IVAGCIAGAVFILLLATGVFF). Topologically, residues 168-499 (FKSKAGKSVN…WAELEVLSTA (332 aa)) are cytoplasmic. Residues 208–474 (EDFSNVIGSC…EVTGRLREIT (267 aa)) form the Protein kinase domain.

The protein resides in the cell membrane. The chain is Probable inactive receptor-like protein kinase At3g56050 from Arabidopsis thaliana (Mouse-ear cress).